A 199-amino-acid polypeptide reads, in one-letter code: Probable GTP-binding protein EngB (199 aa).

In terms of domain architecture, EngB-type G spans D28 to V199. GTP is bound by residues G36–S43, G63–L67, D81–G84, T148–D151, and F180–S182. S43 and T65 together coordinate Mg(2+).

The protein belongs to the TRAFAC class TrmE-Era-EngA-EngB-Septin-like GTPase superfamily. EngB GTPase family. Requires Mg(2+) as cofactor.

Functionally, necessary for normal cell division and for the maintenance of normal septation. The protein is Probable GTP-binding protein EngB of Streptococcus pyogenes serotype M18 (strain MGAS8232).